The sequence spans 356 residues: uncharacterized protein (356 aa).

Positions 1 to 21 (MKLITAPCRALLALPFCYAFS) are cleaved as a signal peptide.

This is an uncharacterized protein from Escherichia coli (strain K12).